We begin with the raw amino-acid sequence, 167 residues long: Probable membrane-bound hydrogenase subunit mbhJ (167 aa).

The [4Fe-4S] cluster site is built by cysteine 35, cysteine 38, cysteine 102, and cysteine 132.

It belongs to the complex I 20 kDa subunit family. In terms of assembly, the membrane-bound hydrogenase complex is composed of MbhK and MbhL, but may also contain MbhJ. [4Fe-4S] cluster serves as cofactor.

The protein localises to the cell membrane. It carries out the reaction H2 + 2 oxidized [2Fe-2S]-[ferredoxin] = 2 reduced [2Fe-2S]-[ferredoxin] + 2 H(+). Its activity is regulated as follows. Inhibited by 0.1 mM Cu(2+). Its function is as follows. Probable subunit of a hydrogen-evolving hydrogenase that utilizes protons both as a substrate for hydrogen production and proton translocation. Acts by coupling the redox reaction via ferredoxin and iron-sulfur (Fe-S) clusters to proton translocation across the membrane, thereby conserving the redox energy in a proton gradient. This Pyrococcus furiosus (strain ATCC 43587 / DSM 3638 / JCM 8422 / Vc1) protein is Probable membrane-bound hydrogenase subunit mbhJ.